The following is an 88-amino-acid chain: Small ribosomal subunit protein uS17 (88 aa).

The protein belongs to the universal ribosomal protein uS17 family. As to quaternary structure, part of the 30S ribosomal subunit.

One of the primary rRNA binding proteins, it binds specifically to the 5'-end of 16S ribosomal RNA. This Marinobacter nauticus (strain ATCC 700491 / DSM 11845 / VT8) (Marinobacter aquaeolei) protein is Small ribosomal subunit protein uS17.